Consider the following 552-residue polypeptide: MKALFRACRIGKVMLRYRLDTLLDGTAAERWLRLAKPFVPRISAEIVEQSRGRRLRLALQELGPIFVKFGQILSTRRDLVPQDIGDELVMLQDRVEPFEGQTARIIIETALGKSVESAFAHFDTVPLASASISQVHAATLHDRREVVVKVLRPDIEHQISDDIALLKSLATLVEHTHPNADKIRPREIVAEIETTLAAELDLQREGANASVLRRFWEASDDIYVPEVIWSHTAERVLTLERMYGIPSDDIALLDASGIDRKALSSKGIRVFYTQVFRDNFFHADAHSGNIWVDSDPARKSNPRFIALDFGIMGQLSQKDQYYLAENFMAIFHKDYRRIAELHVEAGWIPQHVRIEELEAAARSVCEPYFTRPLSQISLAEVLMKLFHVARRYQLTLQPQLILLQKTLLNIEGVGRQLDPELDIWVVARPVLERILRARYSPRHALKELNKRLPEIMTHAPDTPRLIHTWLVQQVESRKQNDVYLQQIRALAMTLQGLQRRVVNAIVGSGLLVAAAVLYGLHPDGLYLGTIPVWSLISGCVGALALFSAWWRS.

The Protein kinase domain maps to 121 to 504 (HFDTVPLASA…QGLQRRVVNA (384 aa)). Residues 127–135 (LASASISQV) and K149 each bind ATP. D284 serves as the catalytic Proton acceptor. The next 2 membrane-spanning stretches (helical) occupy residues 501 to 521 (VVNAIVGSGLLVAAAVLYGLH) and 530 to 550 (IPVWSLISGCVGALALFSAWW).

Belongs to the ABC1 family. UbiB subfamily.

The protein localises to the cell inner membrane. It participates in cofactor biosynthesis; ubiquinone biosynthesis [regulation]. In terms of biological role, is probably a protein kinase regulator of UbiI activity which is involved in aerobic coenzyme Q (ubiquinone) biosynthesis. This Xylella fastidiosa (strain M12) protein is Probable protein kinase UbiB.